The chain runs to 743 residues: Phosphoribosylformylglycinamidine synthase subunit PurL (743 aa).

His-50 is an active-site residue. The ATP site is built by Tyr-53 and Lys-92. Glu-94 contacts Mg(2+). Residues Ser-95 to His-98 and Arg-117 each bind substrate. The active-site Proton acceptor is His-96. Asp-118 serves as a coordination point for Mg(2+). Position 241 (Gln-241) interacts with substrate. Asp-269 lines the Mg(2+) pocket. Position 313 to 315 (Glu-313 to Gln-315) interacts with substrate. Positions 495 and 532 each coordinate ATP. Asn-533 lines the Mg(2+) pocket. Ser-535 lines the substrate pocket.

Belongs to the FGAMS family. Monomer. Part of the FGAM synthase complex composed of 1 PurL, 1 PurQ and 2 PurS subunits.

Its subcellular location is the cytoplasm. It carries out the reaction N(2)-formyl-N(1)-(5-phospho-beta-D-ribosyl)glycinamide + L-glutamine + ATP + H2O = 2-formamido-N(1)-(5-O-phospho-beta-D-ribosyl)acetamidine + L-glutamate + ADP + phosphate + H(+). It participates in purine metabolism; IMP biosynthesis via de novo pathway; 5-amino-1-(5-phospho-D-ribosyl)imidazole from N(2)-formyl-N(1)-(5-phospho-D-ribosyl)glycinamide: step 1/2. In terms of biological role, part of the phosphoribosylformylglycinamidine synthase complex involved in the purines biosynthetic pathway. Catalyzes the ATP-dependent conversion of formylglycinamide ribonucleotide (FGAR) and glutamine to yield formylglycinamidine ribonucleotide (FGAM) and glutamate. The FGAM synthase complex is composed of three subunits. PurQ produces an ammonia molecule by converting glutamine to glutamate. PurL transfers the ammonia molecule to FGAR to form FGAM in an ATP-dependent manner. PurS interacts with PurQ and PurL and is thought to assist in the transfer of the ammonia molecule from PurQ to PurL. The protein is Phosphoribosylformylglycinamidine synthase subunit PurL of Rhizobium leguminosarum bv. trifolii (strain WSM2304).